Consider the following 385-residue polypeptide: MELNSEDVLVARYGELVLKGKNRSYFTKQLKINIKKAFKKLEINNSIVYEFDRIVVFDIKKEQRAILQELFSFLPGISLFFFASQIVREENKLLDLLFNLFKDFNSFKLEVKRRDKNFAENSSNFKKYLAVKLFEKYQLKGVINNPEIIANIEILKEHFLVFTERFKGKGGLPVYSSGKALVLLSGGIDSPVAASLVMQRGFNIDFITFINEPNKNQKTIEKITRLANLISFNKTICSGKLLVFDFTAIQKELIHISNESYRIVLMRRVFYKAASMFKYDCLVTGEVLGQVASQTIENLKVIQSATPDTFIVRPLIGFSKDKIIELAKFFNTFDISIEQHLDTCSEFSPKNPTTKAKLINVEKLESELIFLNDLIEKGVSELSND.

One can recognise a THUMP domain in the interval 65–165; that stretch reads AILQELFSFL…KEHFLVFTER (101 aa). Residues 183 to 184, 208 to 209, R267, G285, and Q294 contribute to the ATP site; these read LL and TF.

Belongs to the ThiI family.

It localises to the cytoplasm. The enzyme catalyses [ThiI sulfur-carrier protein]-S-sulfanyl-L-cysteine + a uridine in tRNA + 2 reduced [2Fe-2S]-[ferredoxin] + ATP + H(+) = [ThiI sulfur-carrier protein]-L-cysteine + a 4-thiouridine in tRNA + 2 oxidized [2Fe-2S]-[ferredoxin] + AMP + diphosphate. It carries out the reaction [ThiS sulfur-carrier protein]-C-terminal Gly-Gly-AMP + S-sulfanyl-L-cysteinyl-[cysteine desulfurase] + AH2 = [ThiS sulfur-carrier protein]-C-terminal-Gly-aminoethanethioate + L-cysteinyl-[cysteine desulfurase] + A + AMP + 2 H(+). It functions in the pathway cofactor biosynthesis; thiamine diphosphate biosynthesis. Its function is as follows. Catalyzes the ATP-dependent transfer of a sulfur to tRNA to produce 4-thiouridine in position 8 of tRNAs, which functions as a near-UV photosensor. Also catalyzes the transfer of sulfur to the sulfur carrier protein ThiS, forming ThiS-thiocarboxylate. This is a step in the synthesis of thiazole, in the thiamine biosynthesis pathway. The sulfur is donated as persulfide by IscS. The polypeptide is Probable tRNA sulfurtransferase (Mycoplasma genitalium (strain ATCC 33530 / DSM 19775 / NCTC 10195 / G37) (Mycoplasmoides genitalium)).